Here is a 56-residue protein sequence, read N- to C-terminus: Mitoregulin (56 aa).

Residues 2–9 (ADVSERTL) are Mitochondrial matrix-facing. A helical transmembrane segment spans residues 10–27 (QVSVLVAFASGVVLGWQA). Over 28 to 56 (NRLRRRYLDWRKRRLQDKLATTQKKLDLA) the chain is Mitochondrial intermembrane.

This sequence belongs to the mitoregulin family. In terms of assembly, interacts with mitochondrial trifunctional enzyme, a heterotetrameric complex composed of 2 HADHA subunits and 2 HADHB subunits. Interacts with cytochrome b5 reductase CYB5R3; the interaction is required to maintain cellular lipid composition and leads to stimulation of mitochondrial respiratory complex I activity. Interacts with ATP synthase subunit ATP5F1B/ATP5B. As to expression, enriched in heart and skeletal muscle (at protein level). Also enriched in adipose tissue with lower levels detected in liver, pancreas and brain (at protein level). Higher levels in differentiated myotubes than in satellite cells.

The protein resides in the mitochondrion inner membrane. Its function is as follows. Positively regulates mitochondrial complex assembly and/or stability. Increases mitochondrial membrane potential while decreasing mitochondrial reactive oxygen species. Increases mitochondrial respiration rate. Increased mitochondrial respiratory activity promotes myogenic differentiation which facilitates muscle growth and regeneration. Increases mitochondrial calcium retention capacity. Plays a role in maintenance of cellular lipid composition through its interaction with cytochrome b5 reductase CYB5R3 which is required for mitochondrial respiratory complex I activity. Interacts with the mitochondrial trifunctional enzyme complex (MTE) and enhances fatty acid beta-oxidation. Not required for MTE formation or stability. Modulates triglyceride clearance in adipocytes through its role in regulating fatty acid beta-oxidation and lipolysis. This is Mitoregulin from Mus musculus (Mouse).